We begin with the raw amino-acid sequence, 446 residues long: GTPase Der (446 aa).

2 EngA-type G domains span residues 3 to 168 (PVIA…YAGQ) and 181 to 354 (IKIA…KAAM). GTP is bound by residues 9–16 (GRPNVGKS), 57–61 (DTGGF), 120–123 (NKAE), 187–194 (GRPNVGKS), 234–238 (DTAGL), and 299–302 (NKWD). Positions 355–439 (SKLPTPKLTR…PLRIEFRSST (85 aa)) constitute a KH-like domain.

This sequence belongs to the TRAFAC class TrmE-Era-EngA-EngB-Septin-like GTPase superfamily. EngA (Der) GTPase family. Associates with the 50S ribosomal subunit.

GTPase that plays an essential role in the late steps of ribosome biogenesis. This is GTPase Der from Paraburkholderia phymatum (strain DSM 17167 / CIP 108236 / LMG 21445 / STM815) (Burkholderia phymatum).